A 398-amino-acid chain; its full sequence is S-adenosylmethionine synthase (398 aa).

Residue histidine 19 coordinates ATP. Aspartate 21 is a binding site for Mg(2+). Residue glutamate 47 participates in K(+) binding. L-methionine is bound by residues glutamate 60 and glutamine 103. Residues 103 to 113 are flexible loop; the sequence is QSPDIAQGVDV. Residues 177-179, 243-244, aspartate 252, 258-259, alanine 275, and lysine 279 each bind ATP; these read DGK, RF, and RK. Aspartate 252 contacts L-methionine. Position 283 (lysine 283) interacts with L-methionine.

It belongs to the AdoMet synthase family. Homotetramer; dimer of dimers. The cofactor is Mg(2+). It depends on K(+) as a cofactor.

Its subcellular location is the cytoplasm. It carries out the reaction L-methionine + ATP + H2O = S-adenosyl-L-methionine + phosphate + diphosphate. The protein operates within amino-acid biosynthesis; S-adenosyl-L-methionine biosynthesis; S-adenosyl-L-methionine from L-methionine: step 1/1. Catalyzes the formation of S-adenosylmethionine (AdoMet) from methionine and ATP. The overall synthetic reaction is composed of two sequential steps, AdoMet formation and the subsequent tripolyphosphate hydrolysis which occurs prior to release of AdoMet from the enzyme. In Symbiobacterium thermophilum (strain DSM 24528 / JCM 14929 / IAM 14863 / T), this protein is S-adenosylmethionine synthase.